The following is a 473-amino-acid chain: Lactate utilization protein B (473 aa).

2 consecutive 4Fe-4S ferredoxin-type domains span residues Gly-302–Tyr-332 and Tyr-351–Leu-380. 7 residues coordinate [4Fe-4S] cluster: Cys-311, Cys-314, Cys-317, Cys-321, Cys-364, Cys-367, and Cys-371.

The protein belongs to the LutB/YkgF family.

Its function is as follows. Is involved in L-lactate degradation and allows cells to grow with lactate as the sole carbon source. Has probably a role as an electron transporter during oxidation of L-lactate. The sequence is that of Lactate utilization protein B from Bacillus cytotoxicus (strain DSM 22905 / CIP 110041 / 391-98 / NVH 391-98).